A 561-amino-acid polypeptide reads, in one-letter code: DNA ligase B (561 aa).

The active-site N6-AMP-lysine intermediate is Lys125.

The protein belongs to the NAD-dependent DNA ligase family. LigB subfamily.

It catalyses the reaction NAD(+) + (deoxyribonucleotide)n-3'-hydroxyl + 5'-phospho-(deoxyribonucleotide)m = (deoxyribonucleotide)n+m + AMP + beta-nicotinamide D-nucleotide.. Its function is as follows. Catalyzes the formation of phosphodiester linkages between 5'-phosphoryl and 3'-hydroxyl groups in double-stranded DNA using NAD as a coenzyme and as the energy source for the reaction. This Salmonella enteritidis PT4 (strain P125109) protein is DNA ligase B.